We begin with the raw amino-acid sequence, 257 residues long: Diacetyl reductase [(S)-acetoin forming] (257 aa).

Residue 6–30 participates in NAD(+) binding; the sequence is IITGSAGGLGKGIAERLANDGFNIV. Residue S139 coordinates substrate. Residue Y152 is the Proton acceptor of the active site. K156 is a catalytic residue.

This sequence belongs to the short-chain dehydrogenases/reductases (SDR) family.

It carries out the reaction (S)-acetoin + NAD(+) = diacetyl + NADH + H(+). In terms of biological role, catalyzes the irreversible reduction of 2,3-butanediol to (S)-acetoin in the presence of NADH. This chain is Diacetyl reductase [(S)-acetoin forming] (butA), found in Staphylococcus epidermidis (strain ATCC 35984 / DSM 28319 / BCRC 17069 / CCUG 31568 / BM 3577 / RP62A).